The primary structure comprises 811 residues: Leucine--tRNA ligase (811 aa).

A 'HIGH' region motif is present at residues 38–49; that stretch reads SYPSGSNLHAGH. Residues 570–574 carry the 'KMSKS' region motif; it reads KMSKS. Lys-573 contributes to the ATP binding site.

This sequence belongs to the class-I aminoacyl-tRNA synthetase family.

The protein localises to the cytoplasm. The catalysed reaction is tRNA(Leu) + L-leucine + ATP = L-leucyl-tRNA(Leu) + AMP + diphosphate. In Clostridium kluyveri (strain ATCC 8527 / DSM 555 / NBRC 12016 / NCIMB 10680 / K1), this protein is Leucine--tRNA ligase.